We begin with the raw amino-acid sequence, 142 residues long: Virulence-associated membrane protein 1 (142 aa).

The signal sequence occupies residues 1–20 (MRGILVALTAALIFCSLTPA). The helical transmembrane segment at 59–79 (IAIAVGTALVTLVSAGVGGML) threads the bilayer.

As to quaternary structure, monomer.

Its subcellular location is the membrane. In terms of biological role, during infection, may play a role in establishing and maintaining biotrophy; the formation of a tight interaction zone between the host and the pathogen. The protein is Virulence-associated membrane protein 1 of Mycosarcoma maydis (Corn smut fungus).